We begin with the raw amino-acid sequence, 259 residues long: Tryptophan synthase alpha chain (259 aa).

Residues Glu-42 and Asp-53 each act as proton acceptor in the active site.

It belongs to the TrpA family. Tetramer of two alpha and two beta chains.

It catalyses the reaction (1S,2R)-1-C-(indol-3-yl)glycerol 3-phosphate + L-serine = D-glyceraldehyde 3-phosphate + L-tryptophan + H2O. The protein operates within amino-acid biosynthesis; L-tryptophan biosynthesis; L-tryptophan from chorismate: step 5/5. Its function is as follows. The alpha subunit is responsible for the aldol cleavage of indoleglycerol phosphate to indole and glyceraldehyde 3-phosphate. The sequence is that of Tryptophan synthase alpha chain from Erythrobacter litoralis (strain HTCC2594).